We begin with the raw amino-acid sequence, 291 residues long: Tetrahydromethanopterin:alpha-L-glutamate ligase (291 aa).

The region spanning 101–286 is the ATP-grasp domain; sequence SVFLELNNLP…IADKLLEKII (186 aa). ATP is bound by residues lysine 136, 175–187, and arginine 203; that span reads QEFI…EHRD. Mg(2+)-binding residues include aspartate 247, glutamate 259, and asparagine 261. Mn(2+) contacts are provided by aspartate 247, glutamate 259, and asparagine 261.

It belongs to the RimK family. MptN subfamily. In terms of assembly, homodimer. It depends on Mg(2+) as a cofactor. Requires Mn(2+) as cofactor.

The enzyme catalyses 5,6,7,8-tetrahydromethanopterin + L-glutamate + ATP = 5,6,7,8-tetrahydrosarcinapterin + ADP + phosphate + H(+). Its pathway is cofactor biosynthesis; 5,6,7,8-tetrahydrosarcinapterin biosynthesis. Catalyzes the ATP or GTP-dependent addition of one L-glutamate molecule to tetrahydromethanopterin, producing tetrahydrosarcinapterin. In Methanocaldococcus jannaschii (strain ATCC 43067 / DSM 2661 / JAL-1 / JCM 10045 / NBRC 100440) (Methanococcus jannaschii), this protein is Tetrahydromethanopterin:alpha-L-glutamate ligase (mptN).